We begin with the raw amino-acid sequence, 406 residues long: 8-amino-7-oxononanoate synthase (406 aa).

Arginine 20 provides a ligand contact to substrate. 116-117 is a pyridoxal 5'-phosphate binding site; that stretch reads GY. A substrate-binding site is contributed by histidine 141. Residues serine 187, histidine 215, and threonine 243 each coordinate pyridoxal 5'-phosphate. Residue lysine 246 is modified to N6-(pyridoxal phosphate)lysine. Position 366 (threonine 366) interacts with substrate.

This sequence belongs to the class-II pyridoxal-phosphate-dependent aminotransferase family. BioF subfamily. Homodimer. It depends on pyridoxal 5'-phosphate as a cofactor.

It catalyses the reaction 6-carboxyhexanoyl-[ACP] + L-alanine + H(+) = (8S)-8-amino-7-oxononanoate + holo-[ACP] + CO2. It participates in cofactor biosynthesis; biotin biosynthesis. Catalyzes the decarboxylative condensation of pimeloyl-[acyl-carrier protein] and L-alanine to produce 8-amino-7-oxononanoate (AON), [acyl-carrier protein], and carbon dioxide. The sequence is that of 8-amino-7-oxononanoate synthase from Cupriavidus metallidurans (strain ATCC 43123 / DSM 2839 / NBRC 102507 / CH34) (Ralstonia metallidurans).